A 142-amino-acid polypeptide reads, in one-letter code: MTTFNLTIVSAENKIFEGAVKSVQATGIEGELGILAGHTPLLTAIKPGIVKFTYNDGIEEVIYVSGGFLEIQPNIVTVLADVAIRGSDLDQDRILAAKKKAEDNIVAKSGDLNHEMLTAKLSKELAKLRAYELTEKLVKNKR.

The protein belongs to the ATPase epsilon chain family. As to quaternary structure, F-type ATPases have 2 components, CF(1) - the catalytic core - and CF(0) - the membrane proton channel. CF(1) has five subunits: alpha(3), beta(3), gamma(1), delta(1), epsilon(1). CF(0) has three main subunits: a, b and c.

The protein localises to the cell inner membrane. Functionally, produces ATP from ADP in the presence of a proton gradient across the membrane. The polypeptide is ATP synthase epsilon chain (Mannheimia succiniciproducens (strain KCTC 0769BP / MBEL55E)).